A 484-amino-acid polypeptide reads, in one-letter code: Monocarboxylate transporter 2 (484 aa).

The Cytoplasmic portion of the chain corresponds to 1–16; it reads MPAPTAVPPPHPLPPD. A helical membrane pass occupies residues 17 to 37; the sequence is GGWGWVVVGASFISIGFSYAF. At 38 to 60 the chain is on the extracellular side; the sequence is PKSVTVFFKDIQEIFRAGHSKVA. A helical membrane pass occupies residues 61-81; it reads WISSIMLAVMYAGGPISSVLV. At 82 to 87 the chain is on the cytoplasmic side; sequence NKYGSR. Residues 88 to 108 traverse the membrane as a helical segment; that stretch reads PVVVIGGLLCCTGMILASFST. Residues 109 to 116 are Extracellular-facing; it reads SMIQLYLT. Residues 117–137 traverse the membrane as a helical segment; that stretch reads IGFISGLGLAFNLQPALTILG. Residues 138 to 144 are Cytoplasmic-facing; the sequence is KYFYRRR. A helical membrane pass occupies residues 145–165; the sequence is PLASGLAMTGSPVFLSSLAPF. Residues 166-174 lie on the Extracellular side of the membrane; that stretch reads NQYLFNSYG. Residues 175–195 traverse the membrane as a helical segment; the sequence is LKGSFLILGGIFLHSCVAGSL. Over 196–245 the chain is Cytoplasmic; sequence MRPVGTSQQSPKSKSKVSSRHDSSTKKAPKLTLAQRINMFLDFSLFKHRG. Residues 198–223 form a disordered region; sequence PVGTSQQSPKSKSKVSSRHDSSTKKA. The helical transmembrane segment at 246 to 266 threads the bilayer; it reads FLIYLSGNVIMFLGFFAPVIF. At 267–281 the chain is on the extracellular side; that stretch reads LSPYAKNRGVDDYKA. The helical transmembrane segment at 282 to 302 threads the bilayer; sequence AYLLSVMAFVDMFSRPCGGLI. Over 303–311 the chain is Cytoplasmic; sequence ANTRLVRPR. Residues 312 to 332 form a helical membrane-spanning segment; the sequence is IQYFFSLAIVFTGVCHLLCPL. Residues 333–337 lie on the Extracellular side of the membrane; it reads AESYT. A helical transmembrane segment spans residues 338–358; the sequence is ALVVYAIFFGYGFGSVSSILF. At 359–372 the chain is on the cytoplasmic side; that stretch reads ETLMDLVGPARFSS. A helical transmembrane segment spans residues 373 to 393; that stretch reads AVGLVTIVECCPVLLGPPLAG. At 394 to 405 the chain is on the extracellular side; that stretch reads KLVDETGEHKYL. A helical membrane pass occupies residues 406–426; sequence FVASGAIVVLAGIWLFIGNAI. Residues 427–484 are Cytoplasmic-facing; it reads NYRLLAKERKREKARKKKSPNRHSKELESLSKSNQDDVAVRVPQAHRSPSDKERESNI. The interval 437–484 is disordered; sequence REKARKKKSPNRHSKELESLSKSNQDDVAVRVPQAHRSPSDKERESNI. The segment covering 438 to 448 has biased composition (basic residues); sequence EKARKKKSPNR. Composition is skewed to basic and acidic residues over residues 449 to 465 and 474 to 484; these read HSKE…DDVA and SPSDKERESNI.

This sequence belongs to the major facilitator superfamily. Monocarboxylate porter (TC 2.A.1.13) family. As to quaternary structure, homodimer. Interacts with GRID2IP. Interacts with EMB; interaction mediates SLC16A7 targeting to the plasma membrane. Interacts with isoform 2 of BSG.

The protein resides in the cell membrane. It is found in the basolateral cell membrane. Its subcellular location is the cytoplasm. The enzyme catalyses 3-methyl-2-oxobutanoate(out) + H(+)(out) = 3-methyl-2-oxobutanoate(in) + H(+)(in). The catalysed reaction is (S)-lactate(in) + H(+)(in) = (S)-lactate(out) + H(+)(out). It catalyses the reaction acetoacetate(out) + H(+)(out) = acetoacetate(in) + H(+)(in). It carries out the reaction (R)-3-hydroxybutanoate(out) + H(+)(out) = (R)-3-hydroxybutanoate(in) + H(+)(in). The enzyme catalyses 4-methyl-2-oxopentanoate(out) + H(+)(out) = 4-methyl-2-oxopentanoate(in) + H(+)(in). The catalysed reaction is pyruvate(out) + H(+)(out) = pyruvate(in) + H(+)(in). It catalyses the reaction (S)-3-hydroxybutanoate(out) + H(+)(out) = (S)-3-hydroxybutanoate(in) + H(+)(in). With respect to regulation, transport activity exhibits steep dependence on substrate concentration. Substrate concentration sensitivity of SLC16A7 arises from the strong inter-subunit cooperativity of the SLC16A7 dimer during transport. Inhibited by AR-C155858. In terms of biological role, proton-coupled monocarboxylate symporter. Catalyzes the rapid transport across the plasma membrane of monocarboxylates such as L-lactate, pyruvate and ketone bodies, acetoacetate, beta-hydroxybutyrate and acetate. Dimerization is functionally required and both subunits work cooperatively in transporting substrate. This chain is Monocarboxylate transporter 2 (SLC16A7), found in Meriones unguiculatus (Mongolian jird).